Here is a 427-residue protein sequence, read N- to C-terminus: 3-phosphoshikimate 1-carboxyvinyltransferase (427 aa).

3 residues coordinate 3-phosphoshikimate: Lys-22, Ser-23, and Arg-27. Lys-22 serves as a coordination point for phosphoenolpyruvate. Phosphoenolpyruvate contacts are provided by Gly-96 and Arg-124. 3-phosphoshikimate-binding residues include Ser-169, Ser-170, Gln-171, Ser-197, Asp-313, Asn-336, and Lys-340. Gln-171 is a phosphoenolpyruvate binding site. Asp-313 acts as the Proton acceptor in catalysis. Phosphoenolpyruvate contacts are provided by Arg-344, Arg-386, and Lys-411.

It belongs to the EPSP synthase family. Monomer.

The protein resides in the cytoplasm. The enzyme catalyses 3-phosphoshikimate + phosphoenolpyruvate = 5-O-(1-carboxyvinyl)-3-phosphoshikimate + phosphate. It participates in metabolic intermediate biosynthesis; chorismate biosynthesis; chorismate from D-erythrose 4-phosphate and phosphoenolpyruvate: step 6/7. Functionally, catalyzes the transfer of the enolpyruvyl moiety of phosphoenolpyruvate (PEP) to the 5-hydroxyl of shikimate-3-phosphate (S3P) to produce enolpyruvyl shikimate-3-phosphate and inorganic phosphate. This Salmonella heidelberg (strain SL476) protein is 3-phosphoshikimate 1-carboxyvinyltransferase.